Consider the following 443-residue polypeptide: Threonine/serine transporter TdcC (443 aa).

11 consecutive transmembrane segments (helical) span residues 22 to 42, 44 to 64, 97 to 117, 140 to 160, 163 to 183, 207 to 227, 261 to 281, 311 to 331, 366 to 386, 389 to 409, and 423 to 443; these read TTWT…FFPI, AGFG…PIAF, GVVI…IYGV, FVAL…KDLM, VMSY…LSLI, ILIT…FSPI, MLMV…LSPA, FAIT…FKSF, ISMI…PNIL, IEAM…MYAI, and DNVF…YKLF.

The protein belongs to the amino acid/polyamine transporter 2 family. SdaC/TdcC subfamily.

The protein resides in the cell inner membrane. It catalyses the reaction L-threonine(in) + H(+)(in) = L-threonine(out) + H(+)(out). The enzyme catalyses L-serine(in) + H(+)(in) = L-serine(out) + H(+)(out). Its function is as follows. Involved in the import of threonine and serine into the cell, with the concomitant import of a proton (symport system). The polypeptide is Threonine/serine transporter TdcC (Shigella sonnei (strain Ss046)).